A 296-amino-acid chain; its full sequence is DNA primase small subunit PriS (296 aa).

Residues Asp82, Asp84, and Asp191 contribute to the active site.

It belongs to the eukaryotic-type primase small subunit family. In terms of assembly, heterodimer of a small subunit (PriS) and a large subunit (PriL). It depends on Mg(2+) as a cofactor. Requires Mn(2+) as cofactor.

Functionally, catalytic subunit of DNA primase, an RNA polymerase that catalyzes the synthesis of short RNA molecules used as primers for DNA polymerase during DNA replication. The small subunit contains the primase catalytic core and has DNA synthesis activity on its own. Binding to the large subunit stabilizes and modulates the activity, increasing the rate of DNA synthesis while decreasing the length of the DNA fragments, and conferring RNA synthesis capability. The DNA polymerase activity may enable DNA primase to also catalyze primer extension after primer synthesis. May also play a role in DNA repair. This chain is DNA primase small subunit PriS, found in Methanopyrus kandleri (strain AV19 / DSM 6324 / JCM 9639 / NBRC 100938).